The following is a 174-amino-acid chain: Crossover junction endodeoxyribonuclease RuvC (174 aa).

Residues Asp8, Glu67, and Asp139 contribute to the active site. The Mg(2+) site is built by Asp8, Glu67, and Asp139.

This sequence belongs to the RuvC family. In terms of assembly, homodimer which binds Holliday junction (HJ) DNA. The HJ becomes 2-fold symmetrical on binding to RuvC with unstacked arms; it has a different conformation from HJ DNA in complex with RuvA. In the full resolvosome a probable DNA-RuvA(4)-RuvB(12)-RuvC(2) complex forms which resolves the HJ. Mg(2+) is required as a cofactor.

It is found in the cytoplasm. The enzyme catalyses Endonucleolytic cleavage at a junction such as a reciprocal single-stranded crossover between two homologous DNA duplexes (Holliday junction).. The RuvA-RuvB-RuvC complex processes Holliday junction (HJ) DNA during genetic recombination and DNA repair. Endonuclease that resolves HJ intermediates. Cleaves cruciform DNA by making single-stranded nicks across the HJ at symmetrical positions within the homologous arms, yielding a 5'-phosphate and a 3'-hydroxyl group; requires a central core of homology in the junction. The consensus cleavage sequence is 5'-(A/T)TT(C/G)-3'. Cleavage occurs on the 3'-side of the TT dinucleotide at the point of strand exchange. HJ branch migration catalyzed by RuvA-RuvB allows RuvC to scan DNA until it finds its consensus sequence, where it cleaves and resolves the cruciform DNA. The protein is Crossover junction endodeoxyribonuclease RuvC of Pseudomonas aeruginosa (strain LESB58).